The primary structure comprises 479 residues: Serine protease HTRA1A (479 aa).

A signal peptide spans 1 to 18 (MILVTLFCICALVTSLQA). One can recognise an IGFBP N-terminal domain in the interval 27-111 (VIGGCPSHCD…RGKQGVCVCK (85 aa)). 6 disulfide bridges follow: C31/C56, C35/C58, C40/C59, C47/C62, C70/C87, and C81/C108. The Kazal-like domain occupies 96–155 (SATVRRRGKQGVCVCKSSDPVCGSDGVSYRDICELKRVSNRAQSLQQPPVLFIQRGACGT). The serine protease stretch occupies residues 203–363 (GSGFVVSDDG…IPSDKIRQFL (161 aa)). Residues H219, D249, and S327 each act as charge relay system in the active site. Residues 364–466 (AESYDRLARG…LRVVVRRGNE (103 aa)) form the PDZ domain.

The protein belongs to the peptidase S1C family. As to quaternary structure, forms homotrimers. In the presence of substrate, may form higher-order multimers in a PDZ-independent manner.

Its subcellular location is the secreted. The protein resides in the cytoplasm. The protein localises to the cytosol. Its function is as follows. Serine protease with a variety of targets, including extracellular matrix proteins and proteoglycans. Through cleavage of proteoglycans, may release soluble FGF-glycosaminoglycan complexes that promote the range and intensity of FGF signals in the extracellular space. Regulates the availability of insulin-like growth factors (IGFs) by cleaving IGF-binding proteins. Inhibits signaling mediated by TGF-beta family members. Consequently, may regulate many physiological processes. Intracellularly, degrades TSC2, leading to the activation of TSC2 downstream targets. The chain is Serine protease HTRA1A (htra1a) from Danio rerio (Zebrafish).